A 310-amino-acid polypeptide reads, in one-letter code: tRNA dimethylallyltransferase (310 aa).

An ATP-binding site is contributed by 9–16 (GPTAVGKT). 11–16 (TAVGKT) is a substrate binding site. The interaction with substrate tRNA stretch occupies residues 34–37 (DSMQ).

This sequence belongs to the IPP transferase family. As to quaternary structure, monomer. Mg(2+) is required as a cofactor.

The enzyme catalyses adenosine(37) in tRNA + dimethylallyl diphosphate = N(6)-dimethylallyladenosine(37) in tRNA + diphosphate. Catalyzes the transfer of a dimethylallyl group onto the adenine at position 37 in tRNAs that read codons beginning with uridine, leading to the formation of N6-(dimethylallyl)adenosine (i(6)A). This Pediococcus pentosaceus (strain ATCC 25745 / CCUG 21536 / LMG 10740 / 183-1w) protein is tRNA dimethylallyltransferase.